Here is a 248-residue protein sequence, read N- to C-terminus: Histone H1, gonadal (248 aa).

Disordered stretches follow at residues 1–46 (PGSP…PPVL) and 115–248 (AVAK…KARK). The segment covering 9 to 39 (ASPRKSPRKSPKKSPRKASASPRRKAKRARA) has biased composition (basic residues). The H15 domain maps to 41-115 (THPPVLEMVQ…GASGRFRVGA (75 aa)). The segment covering 118 to 248 (KPKKAKKTSA…KRRSPKKARK (131 aa)) has biased composition (basic residues).

This sequence belongs to the histone H1/H5 family. Sperm.

The protein resides in the nucleus. The protein localises to the chromosome. Histones H1 are necessary for the condensation of nucleosome chains into higher-order structures. This Parechinus angulosus (Angulate sea urchin) protein is Histone H1, gonadal.